The chain runs to 420 residues: COP9 signalosome complex subunit 11 (420 aa).

One can recognise a PCI domain in the interval 177–346 (SIHEHPSLVD…VYYKEDLPVG (170 aa)). Positions 386–420 (VEPLNRSQDMDAFELHEQSEDEEYEEEHLEEGENV) are disordered. The span at 404-420 (SEDEEYEEEHLEEGENV) shows a compositional bias: acidic residues.

Component of a COP9 signalosome-like (CSN) complex.

The protein localises to the cytoplasm. The protein resides in the nucleus. Component of the COP9 signalosome (CSN) complex that acts as an regulator of the ubiquitin (Ubl) conjugation pathway by mediating the deneddylation of the cullin subunit of SCF-type E3 ubiquitin-protein ligase complexes The CSN complex is involved in the regulation of the mating pheromone response. PCI8 may also be involved in transcriptional and translational control. This Eremothecium gossypii (strain ATCC 10895 / CBS 109.51 / FGSC 9923 / NRRL Y-1056) (Yeast) protein is COP9 signalosome complex subunit 11 (PCI8).